A 157-amino-acid polypeptide reads, in one-letter code: Phosphopantetheine adenylyltransferase (157 aa).

Serine 8 lines the substrate pocket. Residues 8 to 9 (SF) and histidine 16 contribute to the ATP site. Residues lysine 40, threonine 72, and arginine 86 each coordinate substrate. Residues 87 to 89 (GLR), glutamate 97, and 122 to 128 (HSFLSSS) contribute to the ATP site.

The protein belongs to the bacterial CoaD family. As to quaternary structure, homohexamer. Mg(2+) is required as a cofactor.

The protein localises to the cytoplasm. The enzyme catalyses (R)-4'-phosphopantetheine + ATP + H(+) = 3'-dephospho-CoA + diphosphate. Its pathway is cofactor biosynthesis; coenzyme A biosynthesis; CoA from (R)-pantothenate: step 4/5. In terms of biological role, reversibly transfers an adenylyl group from ATP to 4'-phosphopantetheine, yielding dephospho-CoA (dPCoA) and pyrophosphate. This chain is Phosphopantetheine adenylyltransferase, found in Prochlorococcus marinus (strain MIT 9313).